Reading from the N-terminus, the 137-residue chain is Large ribosomal subunit protein uL16 (137 aa).

This sequence belongs to the universal ribosomal protein uL16 family. As to quaternary structure, part of the 50S ribosomal subunit.

Functionally, binds 23S rRNA and is also seen to make contacts with the A and possibly P site tRNAs. This chain is Large ribosomal subunit protein uL16, found in Xanthobacter autotrophicus (strain ATCC BAA-1158 / Py2).